Here is a 257-residue protein sequence, read N- to C-terminus: Acetylglutamate kinase (257 aa).

Substrate is bound by residues 43 to 44 (GG), R65, and N157. Residues 180 to 185 (DISGIL) and 208 to 210 (IIT) each bind ATP.

This sequence belongs to the acetylglutamate kinase family. ArgB subfamily. As to quaternary structure, homodimer.

Its subcellular location is the cytoplasm. The catalysed reaction is N-acetyl-L-glutamate + ATP = N-acetyl-L-glutamyl 5-phosphate + ADP. Its pathway is amino-acid biosynthesis; L-arginine biosynthesis; N(2)-acetyl-L-ornithine from L-glutamate: step 2/4. Its function is as follows. Catalyzes the ATP-dependent phosphorylation of N-acetyl-L-glutamate. The protein is Acetylglutamate kinase of Sodalis glossinidius (strain morsitans).